Reading from the N-terminus, the 430-residue chain is UDP-N-acetylglucosamine 1-carboxyvinyltransferase (430 aa).

22–23 (KN) contributes to the phosphoenolpyruvate binding site. Residue R102 participates in UDP-N-acetyl-alpha-D-glucosamine binding. Residue C126 is the Proton donor of the active site. C126 carries the 2-(S-cysteinyl)pyruvic acid O-phosphothioketal modification. UDP-N-acetyl-alpha-D-glucosamine is bound by residues 131–135 (RPVDL), 172–175 (KVSV), D317, and I339.

It belongs to the EPSP synthase family. MurA subfamily.

Its subcellular location is the cytoplasm. It catalyses the reaction phosphoenolpyruvate + UDP-N-acetyl-alpha-D-glucosamine = UDP-N-acetyl-3-O-(1-carboxyvinyl)-alpha-D-glucosamine + phosphate. It functions in the pathway cell wall biogenesis; peptidoglycan biosynthesis. Functionally, cell wall formation. Adds enolpyruvyl to UDP-N-acetylglucosamine. This is UDP-N-acetylglucosamine 1-carboxyvinyltransferase from Sinorhizobium medicae (strain WSM419) (Ensifer medicae).